Here is a 291-residue protein sequence, read N- to C-terminus: Transcription initiation factor IIE subunit beta (291 aa).

Residue methionine 1 is modified to N-acetylmethionine. A compositionally biased stretch (basic and acidic residues) spans 1-13; the sequence is MDPSLLRERELFK. Residues 1–63 are disordered; the sequence is MDPSLLRERE…NSDHSNGSFN (63 aa). Positions 50–62 are enriched in polar residues; that stretch reads GSKQNSDHSNGSF. Serine 61 is modified (phosphoserine). The segment at residues 66 to 146 is a DNA-binding region (TFIIE beta); sequence ALSGSSGYKF…YAFKPKYNVR (81 aa). At lysine 74 the chain carries N6-acetyllysine. The disordered stretch occupies residues 243 to 272; the sequence is SSMQESGPKKVAPIQRRKKPASQKKRRFKT. A compositionally biased stretch (basic residues) spans 257 to 271; sequence QRRKKPASQKKRRFK.

This sequence belongs to the TFIIE beta subunit family. In terms of assembly, tetramer of two alpha and two beta chains. Interacts with FACT subunit SUPT16H. Interacts with ATF7IP. Interacts with SND1. Part of TBP-based Pol II pre-initiation complex (PIC), in which Pol II core assembles with general transcription factors and other specific initiation factors including GTF2E1, GTF2E2, GTF2F1, GTF2F2, TCEA1, ERCC2, ERCC3, GTF2H2, GTF2H3, GTF2H4, GTF2H5, GTF2A1, GTF2A2, GTF2B and TBP; this large multi-subunit PIC complex mediates DNA unwinding and targets Pol II core to the transcription start site where the first phosphodiester bond forms.

It is found in the nucleus. In terms of biological role, recruits TFIIH to the initiation complex and stimulates the RNA polymerase II C-terminal domain kinase and DNA-dependent ATPase activities of TFIIH. Both TFIIH and TFIIE are required for promoter clearance by RNA polymerase. The protein is Transcription initiation factor IIE subunit beta (GTF2E2) of Homo sapiens (Human).